Here is a 237-residue protein sequence, read N- to C-terminus: Endonuclease V (237 aa).

Residues D46 and D114 each coordinate Mg(2+).

It belongs to the endonuclease V family. Mg(2+) is required as a cofactor.

The protein resides in the cytoplasm. It catalyses the reaction Endonucleolytic cleavage at apurinic or apyrimidinic sites to products with a 5'-phosphate.. In terms of biological role, DNA repair enzyme involved in the repair of deaminated bases. Selectively cleaves double-stranded DNA at the second phosphodiester bond 3' to a deoxyinosine leaving behind the intact lesion on the nicked DNA. The chain is Endonuclease V from Xanthomonas oryzae pv. oryzae (strain PXO99A).